Here is a 172-residue protein sequence, read N- to C-terminus: NAD(P)H-quinone oxidoreductase subunit J (172 aa).

This sequence belongs to the complex I 30 kDa subunit family. As to quaternary structure, NDH-1 can be composed of about 15 different subunits; different subcomplexes with different compositions have been identified which probably have different functions.

It is found in the cellular thylakoid membrane. The enzyme catalyses a plastoquinone + NADH + (n+1) H(+)(in) = a plastoquinol + NAD(+) + n H(+)(out). The catalysed reaction is a plastoquinone + NADPH + (n+1) H(+)(in) = a plastoquinol + NADP(+) + n H(+)(out). NDH-1 shuttles electrons from an unknown electron donor, via FMN and iron-sulfur (Fe-S) centers, to quinones in the respiratory and/or the photosynthetic chain. The immediate electron acceptor for the enzyme in this species is believed to be plastoquinone. Couples the redox reaction to proton translocation, and thus conserves the redox energy in a proton gradient. Cyanobacterial NDH-1 also plays a role in inorganic carbon-concentration. This Synechococcus elongatus (strain ATCC 33912 / PCC 7942 / FACHB-805) (Anacystis nidulans R2) protein is NAD(P)H-quinone oxidoreductase subunit J.